We begin with the raw amino-acid sequence, 310 residues long: Protein OS-9 homolog (310 aa).

The N-terminal stretch at 1–40 (MFSSSMFPHLILPAIGSSKVRTMVLPFAFVGFFIFPICLA) is a signal peptide. N-linked (GlcNAc...) asparagine glycans are attached at residues asparagine 60, asparagine 97, and asparagine 104. An MRH domain is found at 129-255 (NVFLIENRGY…TIHVPGLCSL (127 aa)). 2 residues coordinate a mannooligosaccharide derivative: tryptophan 139 and glutamine 151. A glycan (N-linked (GlcNAc...) asparagine) is linked at asparagine 204. Intrachain disulfides connect cysteine 208-cysteine 241 and cysteine 223-cysteine 253. A mannooligosaccharide derivative contacts are provided by aspartate 209, arginine 215, glutamate 237, and tyrosine 243. Basic and acidic residues-rich tracts occupy residues 282–292 (VDHKDSQHVVD) and 301–310 (EVKEVETQSS). The disordered stretch occupies residues 282 to 310 (VDHKDSQHVVDEVAQTSPPEVKEVETQSS).

It belongs to the OS-9 family. In terms of assembly, interacts with missfolded ER lumenal proteins.

The protein localises to the endoplasmic reticulum membrane. Functionally, lectin involved in the quality control of the secretory pathway. As a member of the endoplasmic reticulum-associated degradation lumenal (ERAD-L) surveillance system, targets misfolded endoplasmic reticulum lumenal glycoproteins for degradation. This Schizosaccharomyces pombe (strain 972 / ATCC 24843) (Fission yeast) protein is Protein OS-9 homolog (yos9).